Here is a 332-residue protein sequence, read N- to C-terminus: Chitin synthase export chaperone (332 aa).

Transmembrane regions (helical) follow at residues 51–71, 86–106, 121–141, 149–169, 182–202, 218–238, and 248–268; these read CAND…IIHV, VFYI…GVTA, GLVS…FQLY, VWLL…VSLL, PIGI…VYVV, LGDI…LYVF, and HYID…MMVY.

The protein belongs to the CHS7 family. In terms of assembly, interacts with CHS3.

The protein resides in the endoplasmic reticulum membrane. Functionally, chaperone required for the export of the chitin synthase CHS3 from the endoplasmic reticulum. The chain is Chitin synthase export chaperone (CHS7) from Phaeosphaeria nodorum (strain SN15 / ATCC MYA-4574 / FGSC 10173) (Glume blotch fungus).